A 115-amino-acid polypeptide reads, in one-letter code: MAKIQFIKGIDEQTVPEIRLTRSRDGNTGTAIFSFINPTVFLLHSSSQNYGEITGMYLQDDEGELSTRNVTANFVNGKPKAVEAVYLIRNKSGWDRLMRFINKYAEDKNMSFYKS.

Belongs to the Psb28 family. In terms of assembly, part of the photosystem II complex.

It is found in the plastid. The protein localises to the chloroplast thylakoid membrane. This chain is Photosystem II reaction center Psb28 protein, found in Cyanidium caldarium (Red alga).